We begin with the raw amino-acid sequence, 257 residues long: Imidazole glycerol phosphate synthase subunit HisF (257 aa).

Active-site residues include aspartate 12 and aspartate 131.

Belongs to the HisA/HisF family. As to quaternary structure, heterodimer of HisH and HisF.

It localises to the cytoplasm. It catalyses the reaction 5-[(5-phospho-1-deoxy-D-ribulos-1-ylimino)methylamino]-1-(5-phospho-beta-D-ribosyl)imidazole-4-carboxamide + L-glutamine = D-erythro-1-(imidazol-4-yl)glycerol 3-phosphate + 5-amino-1-(5-phospho-beta-D-ribosyl)imidazole-4-carboxamide + L-glutamate + H(+). The protein operates within amino-acid biosynthesis; L-histidine biosynthesis; L-histidine from 5-phospho-alpha-D-ribose 1-diphosphate: step 5/9. IGPS catalyzes the conversion of PRFAR and glutamine to IGP, AICAR and glutamate. The HisF subunit catalyzes the cyclization activity that produces IGP and AICAR from PRFAR using the ammonia provided by the HisH subunit. This is Imidazole glycerol phosphate synthase subunit HisF from Rhodococcus erythropolis (strain PR4 / NBRC 100887).